Consider the following 322-residue polypeptide: Transaldolase (322 aa).

The active-site Schiff-base intermediate with substrate is K136.

It belongs to the transaldolase family. Type 1 subfamily. As to quaternary structure, homodimer.

It is found in the cytoplasm. It catalyses the reaction D-sedoheptulose 7-phosphate + D-glyceraldehyde 3-phosphate = D-erythrose 4-phosphate + beta-D-fructose 6-phosphate. It participates in carbohydrate degradation; pentose phosphate pathway; D-glyceraldehyde 3-phosphate and beta-D-fructose 6-phosphate from D-ribose 5-phosphate and D-xylulose 5-phosphate (non-oxidative stage): step 2/3. In terms of biological role, transaldolase is important for the balance of metabolites in the pentose-phosphate pathway. The sequence is that of Transaldolase from Xanthomonas euvesicatoria pv. vesicatoria (strain 85-10) (Xanthomonas campestris pv. vesicatoria).